Reading from the N-terminus, the 582-residue chain is ATP-dependent lipid A-core flippase (582 aa).

Transmembrane regions (helical) follow at residues leucine 16–leucine 36, leucine 64–isoleucine 84, isoleucine 153–valine 173, proline 253–proline 273, and valine 275–methionine 295. The 283-residue stretch at isoleucine 28–arginine 310 folds into the ABC transmembrane type-1 domain. Positions valine 342–methionine 578 constitute an ABC transporter domain. ATP is bound at residue glycine 376–serine 383.

Belongs to the ABC transporter superfamily. Lipid exporter (TC 3.A.1.106) family. As to quaternary structure, homodimer.

The protein localises to the cell inner membrane. It carries out the reaction ATP + H2O + lipid A-core oligosaccharideSide 1 = ADP + phosphate + lipid A-core oligosaccharideSide 2.. Functionally, involved in lipopolysaccharide (LPS) biosynthesis. Translocates lipid A-core from the inner to the outer leaflet of the inner membrane. Transmembrane domains (TMD) form a pore in the inner membrane and the ATP-binding domain (NBD) is responsible for energy generation. This is ATP-dependent lipid A-core flippase from Escherichia coli O6:K15:H31 (strain 536 / UPEC).